Consider the following 541-residue polypeptide: Testis-specific chromodomain protein Y 2 (541 aa).

Positions 6 to 66 (FEVEAIVDKR…RQTEKQKKLT (61 aa)) constitute a Chromo domain. Residues 72 to 104 (RIFSNNARRRTSRSTKANYSKNSPKTPVTDKHH) are disordered. Polar residues predominate over residues 87 to 97 (KANYSKNSPKT).

As to expression, testis specific.

The protein resides in the nucleus. It carries out the reaction L-lysyl-[protein] + acetyl-CoA = N(6)-acetyl-L-lysyl-[protein] + CoA + H(+). Functionally, may have histone acetyltransferase activity. In Homo sapiens (Human), this protein is Testis-specific chromodomain protein Y 2 (CDY2A).